Reading from the N-terminus, the 197-residue chain is Outer-membrane lipoprotein LolB (197 aa).

The signal sequence occupies residues 1-20; that stretch reads MNRSRRLALFCLGAPLLLQA. C21 is lipidated: N-palmitoyl cysteine. C21 carries the S-diacylglycerol cysteine lipid modification.

Belongs to the LolB family. Monomer.

The protein resides in the cell outer membrane. In terms of biological role, plays a critical role in the incorporation of lipoproteins in the outer membrane after they are released by the LolA protein. This is Outer-membrane lipoprotein LolB from Cupriavidus necator (strain ATCC 17699 / DSM 428 / KCTC 22496 / NCIMB 10442 / H16 / Stanier 337) (Ralstonia eutropha).